A 24-amino-acid chain; its full sequence is FLPAIAGMAAKFLPKIFCAISKKC.

A disulfide bond links C18 and C24.

As to expression, expressed by the skin glands.

Its subcellular location is the secreted. Its function is as follows. Antibacterial activity against Gram-positive bacterium S.aureus and Gram-negative bacterium E.coli. Has activity against C.albicans. The protein is Brevinin-1Bb of Lithobates berlandieri (Rio Grande leopard frog).